The chain runs to 96 residues: Transcription and mRNA export factor SUS1 (96 aa).

It belongs to the ENY2 family. Component of the nuclear pore complex (NPC)-associated TREX-2 complex (transcription and export complex 2), composed of at least SUS1, SAC3, THP1, SEM1, and CDC31. TREX-2 contains 2 SUS1 chains. The TREX-2 complex interacts with the nucleoporin NUP1. Component of the 1.8 MDa SAGA transcription coactivator-HAT complex. SAGA is built of 5 distinct domains with specialized functions. Within the SAGA complex, SUS1, SGF11, SGF73 and UBP8 form an additional subcomplex of SAGA called the DUB module (deubiquitination module). Interacts directly with THP1, SAC3, SGF11, and with the RNA polymerase II.

It is found in the nucleus. The protein localises to the nucleoplasm. Its subcellular location is the cytoplasm. The protein resides in the P-body. Its function is as follows. Involved in mRNA export coupled transcription activation by association with both the TREX-2 and the SAGA complexes. At the promoters, SAGA is required for recruitment of the basal transcription machinery. It influences RNA polymerase II transcriptional activity through different activities such as TBP interaction and promoter selectivity, interaction with transcription activators, and chromatin modification through histone acetylation and deubiquitination. Within the SAGA complex, participates in a subcomplex required for deubiquitination of H2B and for the maintenance of steady-state H3 methylation levels. The TREX-2 complex functions in docking export-competent ribonucleoprotein particles (mRNPs) to the nuclear entrance of the nuclear pore complex (nuclear basket). TREX-2 participates in mRNA export and accurate chromatin positioning in the nucleus by tethering genes to the nuclear periphery. May also be involved in cytoplasmic mRNA decay by interaction with components of P-bodies. This chain is Transcription and mRNA export factor SUS1, found in Kluyveromyces lactis (strain ATCC 8585 / CBS 2359 / DSM 70799 / NBRC 1267 / NRRL Y-1140 / WM37) (Yeast).